Consider the following 231-residue polypeptide: ATP phosphoribosyltransferase (231 aa).

The protein belongs to the ATP phosphoribosyltransferase family. Short subfamily. Heteromultimer composed of HisG and HisZ subunits.

The protein resides in the cytoplasm. It catalyses the reaction 1-(5-phospho-beta-D-ribosyl)-ATP + diphosphate = 5-phospho-alpha-D-ribose 1-diphosphate + ATP. The protein operates within amino-acid biosynthesis; L-histidine biosynthesis; L-histidine from 5-phospho-alpha-D-ribose 1-diphosphate: step 1/9. In terms of biological role, catalyzes the condensation of ATP and 5-phosphoribose 1-diphosphate to form N'-(5'-phosphoribosyl)-ATP (PR-ATP). Has a crucial role in the pathway because the rate of histidine biosynthesis seems to be controlled primarily by regulation of HisG enzymatic activity. The sequence is that of ATP phosphoribosyltransferase (hisG) from Rhizobium etli (strain CIAT 652).